The chain runs to 571 residues: Isocitrate dehydrogenase kinase/phosphatase 2 (571 aa).

Residues 313-319 (APGTPGM) and Lys334 contribute to the ATP site. Asp369 is an active-site residue.

The protein belongs to the AceK family.

The protein resides in the cytoplasm. The enzyme catalyses L-seryl-[isocitrate dehydrogenase] + ATP = O-phospho-L-seryl-[isocitrate dehydrogenase] + ADP + H(+). Functionally, bifunctional enzyme which can phosphorylate or dephosphorylate isocitrate dehydrogenase (IDH) on a specific serine residue. This is a regulatory mechanism which enables bacteria to bypass the Krebs cycle via the glyoxylate shunt in response to the source of carbon. When bacteria are grown on glucose, IDH is fully active and unphosphorylated, but when grown on acetate or ethanol, the activity of IDH declines drastically concomitant with its phosphorylation. This Pseudoalteromonas translucida (strain TAC 125) protein is Isocitrate dehydrogenase kinase/phosphatase 2.